We begin with the raw amino-acid sequence, 359 residues long: 4-hydroxy-3-methylbut-2-en-1-yl diphosphate synthase (flavodoxin) (359 aa).

[4Fe-4S] cluster contacts are provided by Cys-264, Cys-267, Cys-299, and Glu-306.

The protein belongs to the IspG family. Requires [4Fe-4S] cluster as cofactor.

The enzyme catalyses (2E)-4-hydroxy-3-methylbut-2-enyl diphosphate + oxidized [flavodoxin] + H2O + 2 H(+) = 2-C-methyl-D-erythritol 2,4-cyclic diphosphate + reduced [flavodoxin]. It participates in isoprenoid biosynthesis; isopentenyl diphosphate biosynthesis via DXP pathway; isopentenyl diphosphate from 1-deoxy-D-xylulose 5-phosphate: step 5/6. In terms of biological role, converts 2C-methyl-D-erythritol 2,4-cyclodiphosphate (ME-2,4cPP) into 1-hydroxy-2-methyl-2-(E)-butenyl 4-diphosphate. This Helicobacter pylori (strain Shi470) protein is 4-hydroxy-3-methylbut-2-en-1-yl diphosphate synthase (flavodoxin).